A 31-amino-acid chain; its full sequence is Cytochrome b6-f complex subunit 6 (31 aa).

The helical transmembrane segment at 4-24 (IFSYIALLLSALVITLTCYIG) threads the bilayer.

The protein belongs to the PetL family. In terms of assembly, the 4 large subunits of the cytochrome b6-f complex are cytochrome b6, subunit IV (17 kDa polypeptide, PetD), cytochrome f and the Rieske protein, while the 4 small subunits are PetG, PetL, PetM and PetN. The complex functions as a dimer.

Its subcellular location is the plastid. The protein resides in the chloroplast thylakoid membrane. Functionally, component of the cytochrome b6-f complex, which mediates electron transfer between photosystem II (PSII) and photosystem I (PSI), cyclic electron flow around PSI, and state transitions. PetL is important for photoautotrophic growth as well as for electron transfer efficiency and stability of the cytochrome b6-f complex. This Chlorella vulgaris (Green alga) protein is Cytochrome b6-f complex subunit 6.